We begin with the raw amino-acid sequence, 253 residues long: MKTYRIGQIVPSSNTTMETEIPAMLQARYAEFPEERFTFHSSRMRMMHVNPEELKAMDIASDRCAVELSDARMSVMAYACLVAIMAQGDGYHRVSQARLQNTVKENGVEIPVLSSAGALVDTLKEFGYKKVSIITPYMKPLTKRVADYIEAEGIEVQDSISLEVSDNLEVGLLNPENLLEHVKRLNHDGVDAVILSACVQMPSLPAIQRAQDQIGKPVLSAAVWTVYQMLKNLGLETRVPNAGHILSGVKPQA.

Substrate-binding positions include Asn14, 80-82, Tyr137, and Asn167; that span reads CLV. The active-site Nucleophile is Cys80. Position 80 is an S-(2-succinyl)cysteine (Cys80). Cys198 (proton donor) is an active-site residue. 199 to 200 provides a ligand contact to substrate; the sequence is VQ.

Belongs to the maleate isomerase family. In terms of assembly, homodimer.

The enzyme catalyses maleate = fumarate. Its function is as follows. Catalyzes cis-trans isomerization of the C2-C3 double bond in maleate to yield fumarate. This Alcaligenes faecalis protein is Maleate isomerase.